The chain runs to 422 residues: MRTLLRLKRLMPEVLWTKRSCSSSSINKSILKHLASKIIATGPISVAEYMREALTNPVLGYYVKNDMLGAGGDFITSPEISQIFGELLGVWCISEWMAAGKSSALQLVELGPGRGSLTSDILRVFSQLKGVLGETGISIHLVEVSPKLSQVQAECLTGNQTQTYDNNHTFYRSGTTCTGLPIYWYHSIEDVPRGFSIFLAHEFFDALPIHKFQRTENGWREVLVDIDPENPGKLRFVVSHRPTLASSTLIQKDESRRHVEVCAEAGVIVQKLASRIAEDGGAALIVDYGHDGTKTDTFRGFKGHQIHDVLEAPGLADLTADVDFSYLRKMAGDQVICLGPITQRSFLKNMGIDSRMQVLLSSNDPSIRAQLIHSYDMLINPEKMGERFQFFSVLNTARLAQREQMQKSTVMPVAGFTELEMQ.

The N-terminal 28 residues, 1 to 28 (MRTLLRLKRLMPEVLWTKRSCSSSSINK), are a transit peptide targeting the mitochondrion.

The protein belongs to the NDUFAF7 family.

Its subcellular location is the mitochondrion. The enzyme catalyses L-arginyl-[protein] + 2 S-adenosyl-L-methionine = N(omega),N(omega)'-dimethyl-L-arginyl-[protein] + 2 S-adenosyl-L-homocysteine + 2 H(+). In terms of biological role, arginine methyltransferase involved in the assembly or stability of mitochondrial NADH:ubiquinone oxidoreductase complex (complex I). Acts by mediating symmetric dimethylation of 'Arg-118' of ndufs2 after it assembles into the complex I, stabilizing the early intermediate complex. The chain is Protein arginine methyltransferase NDUFAF7, mitochondrial from Danio rerio (Zebrafish).